The chain runs to 296 residues: Putative peptide transport system permease protein BRA1093/BS1330_II1085 (296 aa).

The next 6 membrane-spanning stretches (helical) occupy residues 35–55 (IGLVLLLIVVLAAVLAPWITN), 97–117 (LWIGLTVAVLSAILGAIIGIA), 131–151 (VMDALMAFPAILLAIGISAAL), 205–225 (ILPNCLAPLLVTLTFVFAYAI), 229–249 (ATLSFLGIGTPPPHASWGSIV), and 260–280 (WWIMLFPGIAITISALAINLI). The ABC transmembrane type-1 domain occupies 97 to 281 (LWIGLTVAVL…ISALAINLIG (185 aa)).

The protein belongs to the binding-protein-dependent transport system permease family. As to quaternary structure, the complex is composed of two ATP-binding proteins (BRA1094), two transmembrane proteins (BRA1092 and BRA1093) and a solute-binding protein (BRA1090).

Its subcellular location is the cell inner membrane. Probably part of an ABC transporter complex that could be involved in peptide import. Probably responsible for the translocation of the substrate across the membrane. The protein is Putative peptide transport system permease protein BRA1093/BS1330_II1085 of Brucella suis biovar 1 (strain 1330).